Here is a 538-residue protein sequence, read N- to C-terminus: Phosphoenolpyruvate carboxykinase (ATP) (538 aa).

3 residues coordinate substrate: Arg-64, Tyr-205, and Lys-211. Residues Lys-211, His-230, and Gly-246–Thr-254 contribute to the ATP site. 2 residues coordinate Mn(2+): Lys-211 and His-230. A Mn(2+)-binding site is contributed by Asp-267. Residues Glu-295, Arg-331, Arg-447 to Ile-448, and Thr-453 contribute to the ATP site. Arg-331 is a binding site for substrate.

It belongs to the phosphoenolpyruvate carboxykinase (ATP) family. In terms of assembly, monomer. Mn(2+) is required as a cofactor.

The protein resides in the cytoplasm. It catalyses the reaction oxaloacetate + ATP = phosphoenolpyruvate + ADP + CO2. The protein operates within carbohydrate biosynthesis; gluconeogenesis. Involved in the gluconeogenesis. Catalyzes the conversion of oxaloacetate (OAA) to phosphoenolpyruvate (PEP) through direct phosphoryl transfer between the nucleoside triphosphate and OAA. In Pasteurella multocida (strain Pm70), this protein is Phosphoenolpyruvate carboxykinase (ATP).